We begin with the raw amino-acid sequence, 127 residues long: Large ribosomal subunit protein bL17 (127 aa).

Belongs to the bacterial ribosomal protein bL17 family. In terms of assembly, part of the 50S ribosomal subunit. Contacts protein L32.

This chain is Large ribosomal subunit protein bL17, found in Lactobacillus delbrueckii subsp. bulgaricus (strain ATCC 11842 / DSM 20081 / BCRC 10696 / JCM 1002 / NBRC 13953 / NCIMB 11778 / NCTC 12712 / WDCM 00102 / Lb 14).